Reading from the N-terminus, the 620-residue chain is Kelch-like protein 32 (620 aa).

The 68-residue stretch at 42–109 folds into the BTB domain; that stretch reads CDITLIAEEQ…AYTGQILLEP (68 aa). 6 Kelch repeats span residues 290-346, 347-398, 399-446, 447-494, 496-547, and 549-599; these read TLYI…VMGD, FLFV…AMEE, YLYA…VADG, LLWI…AVQR, LYVL…VHNG, and IYLV…FLPA.

The protein is Kelch-like protein 32 (KLHL32) of Homo sapiens (Human).